The sequence spans 307 residues: Small ribosomal subunit biogenesis GTPase RsgA (307 aa).

Residues 1 to 20 (MPSEHPFSDGISTPNPKETM) are disordered. Residues 10 to 20 (GISTPNPKETM) are compositionally biased toward polar residues. The CP-type G domain maps to 85–242 (RQDAWKTKLI…LIDSPGLQEF (158 aa)). Residues 135 to 138 (NKAD) and 184 to 192 (GQSGMGKST) contribute to the GTP site. The Zn(2+) site is built by C266, C271, H273, and C279.

Belongs to the TRAFAC class YlqF/YawG GTPase family. RsgA subfamily. As to quaternary structure, monomer. Associates with 30S ribosomal subunit, binds 16S rRNA. Zn(2+) serves as cofactor.

The protein resides in the cytoplasm. Its function is as follows. One of several proteins that assist in the late maturation steps of the functional core of the 30S ribosomal subunit. Helps release RbfA from mature subunits. May play a role in the assembly of ribosomal proteins into the subunit. Circularly permuted GTPase that catalyzes slow GTP hydrolysis, GTPase activity is stimulated by the 30S ribosomal subunit. The protein is Small ribosomal subunit biogenesis GTPase RsgA of Neisseria meningitidis serogroup C / serotype 2a (strain ATCC 700532 / DSM 15464 / FAM18).